Here is a 66-residue protein sequence, read N- to C-terminus: DNA-directed RNA polymerase subunit Rpo10 (66 aa).

Positions 7, 10, 47, and 48 each coordinate Zn(2+).

This sequence belongs to the archaeal Rpo10/eukaryotic RPB10 RNA polymerase subunit family. In terms of assembly, part of the RNA polymerase complex. Requires Zn(2+) as cofactor.

The protein localises to the cytoplasm. It catalyses the reaction RNA(n) + a ribonucleoside 5'-triphosphate = RNA(n+1) + diphosphate. Its function is as follows. DNA-dependent RNA polymerase (RNAP) catalyzes the transcription of DNA into RNA using the four ribonucleoside triphosphates as substrates. The chain is DNA-directed RNA polymerase subunit Rpo10 from Halobacterium salinarum (strain ATCC 29341 / DSM 671 / R1).